We begin with the raw amino-acid sequence, 383 residues long: Decapping nuclease RAI1 (383 aa).

Glu166 contacts a divalent metal cation. Substrate is bound at residue Glu215. Asp217, Glu235, and Leu236 together coordinate a divalent metal cation. Lys237 and Gln261 together coordinate substrate.

The protein belongs to the DXO/Dom3Z family. Interacts with RAT1; the interaction is direct, stabilizes RAT1 protein structure and stimulates its exoribonuclease activity. The interaction also stimulates RAI1 pyrophosphohydrolase activity, probably by recruiting it to mRNA substrates. Requires a divalent metal cation as cofactor.

It is found in the nucleus. It carries out the reaction a 5'-end NAD(+)-phospho-ribonucleoside in mRNA + H2O = a 5'-end phospho-ribonucleoside in mRNA + NAD(+) + H(+). It catalyses the reaction a 5'-end (N(7)-methyl 5'-triphosphoguanosine)-ribonucleoside-ribonucleotide in mRNA + H2O = a (N(7)-methyl 5'-triphosphoguanosine)-nucleoside + a 5'-end phospho-ribonucleoside in mRNA + H(+). The enzyme catalyses a 5'-end triphospho-ribonucleoside in mRNA + H2O = a 5'-end phospho-ribonucleoside in mRNA + diphosphate + H(+). Functionally, decapping enzyme for NAD-capped RNAs: specifically hydrolyzes the nicotinamide adenine dinucleotide (NAD) cap from a subset of RNAs by removing the entire NAD moiety from the 5'-end of an NAD-capped RNA. The NAD-cap is present at the 5'-end of some RNAs and snoRNAs. In contrast to the canonical 5'-end N7 methylguanosine (m7G) cap, the NAD cap promotes mRNA decay. Also acts as a non-canonical decapping enzyme that removes the entire cap structure of m7G capped or incompletely capped RNAs. Has decapping activity toward incomplete 5'-end m7G cap mRNAs such as unmethylated 5'-end-capped RNA (cap0), while it has no activity toward 2'-O-ribose methylated m7G cap (cap1). Also possesses RNA 5'-pyrophosphohydrolase activity by hydrolyzing the 5'-end triphosphate to release pyrophosphates. Stimulates exoribonuclease activity of Rat1, allowing it to degrade RNAs with stable secondary structure more effectively. The sequence is that of Decapping nuclease RAI1 from Lachancea thermotolerans (strain ATCC 56472 / CBS 6340 / NRRL Y-8284) (Yeast).